The primary structure comprises 90 residues: Probable Fe(2+)-trafficking protein (90 aa).

The protein belongs to the Fe(2+)-trafficking protein family.

In terms of biological role, could be a mediator in iron transactions between iron acquisition and iron-requiring processes, such as synthesis and/or repair of Fe-S clusters in biosynthetic enzymes. The chain is Probable Fe(2+)-trafficking protein from Azoarcus sp. (strain BH72).